An 806-amino-acid polypeptide reads, in one-letter code: G-type lectin S-receptor-like serine/threonine-protein kinase At1g61430 (806 aa).

Positions 1–24 are cleaved as a signal peptide; it reads MGKKRIVFFAYLPFFTIFMSFSFA. A Bulb-type lectin domain is found at 25–144; the sequence is GITKESPFSI…VSGRTLWQSF (120 aa). Residues 25-425 lie on the Extracellular side of the membrane; the sequence is GITKESPFSI…ELDVNKRKMT (401 aa). Residues Asn-53, Asn-94, Asn-117, and Asn-236 are each glycosylated (N-linked (GlcNAc...) asparagine). The EGF-like domain occupies 277–313; that stretch reads PANSCDIYGVCGPFGLCVVSIPPKCKCFKGFVPKFAK. 2 disulfides stabilise this stretch: Cys-281–Cys-293 and Cys-287–Cys-301. Asn-319, Asn-335, and Asn-374 each carry an N-linked (GlcNAc...) asparagine glycan. One can recognise a PAN domain in the interval 332 to 414; that stretch reads CQGNSSGKDA…GELLSIRLAR (83 aa). Intrachain disulfides connect Cys-367/Cys-388 and Cys-371/Cys-377. The chain crosses the membrane as a helical span at residues 426 to 446; that stretch reads IVASTVSLTLFVIFGFAAFGF. Topologically, residues 447–806 are cytoplasmic; the sequence is WRCRVEHNAH…EMTESVIQGR (360 aa). Residues 489-777 form the Protein kinase domain; it reads FSLSNKLGPG…DLPLPKKPTF (289 aa). Residues 495–503 and Lys-520 each bind ATP; that span reads LGPGGFGSV. 2 positions are modified to phosphoserine: Ser-526 and Ser-541. The caM-binding stretch occupies residues 581–598; the sequence is RKKLELDWPKRFEIIEGI. Asp-617 serves as the catalytic Proton acceptor. A phosphoserine mark is found at Ser-621 and Ser-634. Position 651 is a phosphothreonine (Thr-651). Residues Ser-694, Ser-695, and Ser-788 each carry the phosphoserine modification.

Belongs to the protein kinase superfamily. Ser/Thr protein kinase family.

Its subcellular location is the cell membrane. The catalysed reaction is L-seryl-[protein] + ATP = O-phospho-L-seryl-[protein] + ADP + H(+). It carries out the reaction L-threonyl-[protein] + ATP = O-phospho-L-threonyl-[protein] + ADP + H(+). This chain is G-type lectin S-receptor-like serine/threonine-protein kinase At1g61430, found in Arabidopsis thaliana (Mouse-ear cress).